A 249-amino-acid polypeptide reads, in one-letter code: 5'-nucleotidase SurE (249 aa).

A divalent metal cation contacts are provided by Asp-8, Asp-9, Ser-39, and Asn-91.

It belongs to the SurE nucleotidase family. Requires a divalent metal cation as cofactor.

The protein resides in the cytoplasm. The catalysed reaction is a ribonucleoside 5'-phosphate + H2O = a ribonucleoside + phosphate. Its function is as follows. Nucleotidase that shows phosphatase activity on nucleoside 5'-monophosphates. The polypeptide is 5'-nucleotidase SurE (Haemophilus influenzae (strain PittEE)).